Here is a 337-residue protein sequence, read N- to C-terminus: N-acetyl-gamma-glutamyl-phosphate reductase (337 aa).

C155 is a catalytic residue.

Belongs to the NAGSA dehydrogenase family. Type 1 subfamily.

The protein localises to the cytoplasm. The enzyme catalyses N-acetyl-L-glutamate 5-semialdehyde + phosphate + NADP(+) = N-acetyl-L-glutamyl 5-phosphate + NADPH + H(+). It functions in the pathway amino-acid biosynthesis; L-arginine biosynthesis; N(2)-acetyl-L-ornithine from L-glutamate: step 3/4. Functionally, catalyzes the NADPH-dependent reduction of N-acetyl-5-glutamyl phosphate to yield N-acetyl-L-glutamate 5-semialdehyde. The sequence is that of N-acetyl-gamma-glutamyl-phosphate reductase from Alteromonas mediterranea (strain DSM 17117 / CIP 110805 / LMG 28347 / Deep ecotype).